The sequence spans 204 residues: Holliday junction branch migration complex subunit RuvA (204 aa).

The tract at residues M1–M64 is domain I. The segment at T65–A143 is domain II. A flexible linker region spans residues L144 to G151. The tract at residues V152–R204 is domain III.

Belongs to the RuvA family. As to quaternary structure, homotetramer. Forms an RuvA(8)-RuvB(12)-Holliday junction (HJ) complex. HJ DNA is sandwiched between 2 RuvA tetramers; dsDNA enters through RuvA and exits via RuvB. An RuvB hexamer assembles on each DNA strand where it exits the tetramer. Each RuvB hexamer is contacted by two RuvA subunits (via domain III) on 2 adjacent RuvB subunits; this complex drives branch migration. In the full resolvosome a probable DNA-RuvA(4)-RuvB(12)-RuvC(2) complex forms which resolves the HJ.

Its subcellular location is the cytoplasm. Its function is as follows. The RuvA-RuvB-RuvC complex processes Holliday junction (HJ) DNA during genetic recombination and DNA repair, while the RuvA-RuvB complex plays an important role in the rescue of blocked DNA replication forks via replication fork reversal (RFR). RuvA specifically binds to HJ cruciform DNA, conferring on it an open structure. The RuvB hexamer acts as an ATP-dependent pump, pulling dsDNA into and through the RuvAB complex. HJ branch migration allows RuvC to scan DNA until it finds its consensus sequence, where it cleaves and resolves the cruciform DNA. The chain is Holliday junction branch migration complex subunit RuvA from Rhizobium etli (strain ATCC 51251 / DSM 11541 / JCM 21823 / NBRC 15573 / CFN 42).